The primary structure comprises 321 residues: tRNA pseudouridine synthase B (321 aa).

Asp47 functions as the Nucleophile in the catalytic mechanism.

It belongs to the pseudouridine synthase TruB family. Type 1 subfamily.

The catalysed reaction is uridine(55) in tRNA = pseudouridine(55) in tRNA. Responsible for synthesis of pseudouridine from uracil-55 in the psi GC loop of transfer RNAs. This chain is tRNA pseudouridine synthase B, found in Shewanella baltica (strain OS223).